Consider the following 312-residue polypeptide: Acetyl-coenzyme A carboxylase carboxyl transferase subunit alpha (312 aa).

One can recognise a CoA carboxyltransferase C-terminal domain in the interval 36–286 (NLEKEISKTY…ADYVKKSLNE (251 aa)).

This sequence belongs to the AccA family. In terms of assembly, acetyl-CoA carboxylase is a heterohexamer composed of biotin carboxyl carrier protein (AccB), biotin carboxylase (AccC) and two subunits each of ACCase subunit alpha (AccA) and ACCase subunit beta (AccD).

It localises to the cytoplasm. It catalyses the reaction N(6)-carboxybiotinyl-L-lysyl-[protein] + acetyl-CoA = N(6)-biotinyl-L-lysyl-[protein] + malonyl-CoA. It functions in the pathway lipid metabolism; malonyl-CoA biosynthesis; malonyl-CoA from acetyl-CoA: step 1/1. In terms of biological role, component of the acetyl coenzyme A carboxylase (ACC) complex. First, biotin carboxylase catalyzes the carboxylation of biotin on its carrier protein (BCCP) and then the CO(2) group is transferred by the carboxyltransferase to acetyl-CoA to form malonyl-CoA. The protein is Acetyl-coenzyme A carboxylase carboxyl transferase subunit alpha of Campylobacter jejuni (strain RM1221).